We begin with the raw amino-acid sequence, 851 residues long: DEAD-box ATP-dependent RNA helicase 29 (851 aa).

Positions 1 to 49 (MARLNPSKPSSRGGKPRSSSADAMAEHKPPPGRPKREGEGASKKKAKSG) are disordered. Residues 7-20 (SKPSSRGGKPRSSS) are compositionally biased toward low complexity. Residues 24 to 42 (MAEHKPPPGRPKREGEGAS) show a composition bias toward basic and acidic residues. Residues 49–77 (GGFESMGLCEEVYRGVRHKGYRVPTPIQR) carry the Q motif motif. The Helicase ATP-binding domain occupies 80 to 253 (MPLILAGHDI…KAGLRDPQIV (174 aa)). 93–100 (ARTGSGKT) contacts ATP. Positions 201–204 (DEAD) match the DEAD box motif. Residues 277–426 (KLAALLYLVR…PAPTEEELLK (150 aa)) form the Helicase C-terminal domain. The interval 702–851 (KWQQKTHRSI…KGKMKGKGTR (150 aa)) is disordered. Positions 733 to 746 (RGNRKHTAAGRGRR) are enriched in basic residues. 2 stretches are compositionally biased toward basic and acidic residues: residues 773–787 (DIAR…ESKF) and 796–825 (RHDG…DGNG). A compositionally biased stretch (basic residues) spans 841-851 (GKGKMKGKGTR).

The protein belongs to the DEAD box helicase family. DDX54/DBP10 subfamily.

The enzyme catalyses ATP + H2O = ADP + phosphate + H(+). The sequence is that of DEAD-box ATP-dependent RNA helicase 29 from Oryza sativa subsp. indica (Rice).